The chain runs to 403 residues: Phosphoglycerate kinase (403 aa).

Substrate contacts are provided by residues 21-23 (DFN), R36, 59-62 (HLGR), R119, and R154. Residues K207, G299, E330, and 357-360 (GGDA) contribute to the ATP site.

This sequence belongs to the phosphoglycerate kinase family. Monomer.

The protein resides in the cytoplasm. It carries out the reaction (2R)-3-phosphoglycerate + ATP = (2R)-3-phospho-glyceroyl phosphate + ADP. The protein operates within carbohydrate degradation; glycolysis; pyruvate from D-glyceraldehyde 3-phosphate: step 2/5. In Chlamydia muridarum (strain MoPn / Nigg), this protein is Phosphoglycerate kinase (pgk).